The following is a 1622-amino-acid chain: FK506-binding protein 5 (1622 aa).

The 92-residue stretch at 178–269 (GDRVSIKYAG…IFDLEVTGSK (92 aa)) folds into the PPIase FKBP-type domain. The tract at residues 268–306 (SKKKEGSEPSLPSLNGQPSNAPQQSLPTQLFDNSPVPQD) is disordered. Over residues 277-303 (SLPSLNGQPSNAPQQSLPTQLFDNSPV) the composition is skewed to polar residues. Arg-314 is subject to Omega-N-methylarginine. Disordered stretches follow at residues 320 to 432 (RATG…GFNN) and 518 to 538 (SPPP…PPPP). Over residues 335 to 432 (ESNSRNSHSN…NMNNNNGFNN (98 aa)) the composition is skewed to low complexity. Coiled-coil stretches lie at residues 607 to 827 (LVQT…ETER) and 854 to 961 (KKEE…LESQ). Disordered regions lie at residues 1043–1097 (KQQQ…EVVV) and 1122–1622 (EEVK…VLPL). 2 stretches are compositionally biased toward acidic residues: residues 1050–1093 (KEEE…EEEK) and 1152–1168 (DDED…DINE). Over residues 1169-1182 (EDLKNIDAEIEKMQ) the composition is skewed to basic and acidic residues. Composition is skewed to acidic residues over residues 1185-1199 (MGDE…EEEK) and 1222-1260 (ESEE…EQED). The segment covering 1261 to 1271 (KVESDVEEKIV) has biased composition (basic and acidic residues). Residues 1320–1335 (DDDEDNEKDVASDSEE) are compositionally biased toward acidic residues. Over residues 1353–1369 (EEKVVEQVKEEINETKF) the composition is skewed to basic and acidic residues. Over residues 1380–1412 (TTTEEKEEEKEEEKVEEEEEKVVEPPTIDDDET) the composition is skewed to acidic residues. Low complexity-rich tracts occupy residues 1435-1449 (STTA…TSST) and 1465-1504 (KTSF…TPTS). Composition is skewed to polar residues over residues 1519 to 1532 (FGNS…PSTT) and 1581 to 1609 (AKSN…SPLT).

This sequence belongs to the FKBP-type PPIase family.

It catalyses the reaction [protein]-peptidylproline (omega=180) = [protein]-peptidylproline (omega=0). With respect to regulation, inhibited by both FK506 and rapamycin. Functionally, PPIases accelerate the folding of proteins by catalyzing the cis-trans isomerization of proline imidic peptide bonds in oligopeptides. This Dictyostelium discoideum (Social amoeba) protein is FK506-binding protein 5 (fkbp5).